The primary structure comprises 72 residues: Translation initiation factor IF-1 (72 aa).

An S1-like domain is found at 1–72 (MAKEDTLEFP…TKGRINYRFK (72 aa)).

Belongs to the IF-1 family. In terms of assembly, component of the 30S ribosomal translation pre-initiation complex which assembles on the 30S ribosome in the order IF-2 and IF-3, IF-1 and N-formylmethionyl-tRNA(fMet); mRNA recruitment can occur at any time during PIC assembly.

The protein resides in the cytoplasm. Its function is as follows. One of the essential components for the initiation of protein synthesis. Stabilizes the binding of IF-2 and IF-3 on the 30S subunit to which N-formylmethionyl-tRNA(fMet) subsequently binds. Helps modulate mRNA selection, yielding the 30S pre-initiation complex (PIC). Upon addition of the 50S ribosomal subunit IF-1, IF-2 and IF-3 are released leaving the mature 70S translation initiation complex. In Ruegeria sp. (strain TM1040) (Silicibacter sp.), this protein is Translation initiation factor IF-1.